The primary structure comprises 118 residues: Vesicle-associated membrane protein 1 (118 aa).

The tract at residues 1–36 (MSAPAQPPAEGTEGTAPGGGPPGPPPNMTSNRRLQQ) is disordered. Residues 1–96 (MSAPAQPPAE…KRKYWWKNCK (96 aa)) are Cytoplasmic-facing. The region spanning 33–93 (RLQQTQAQVE…AKLKRKYWWK (61 aa)) is the v-SNARE coiled-coil homology domain. A Phosphoserine modification is found at Ser-63. A helical; Anchor for type IV membrane protein membrane pass occupies residues 97 to 116 (MMIMLGAICAIIVVVIVIYF). At 117–118 (FT) the chain is on the vesicular side.

It belongs to the synaptobrevin family. As to quaternary structure, interacts with VAPA and VAPB. (Microbial infection) Targeted and hydrolyzed by C.botulinum neurotoxin type B (BoNT/B, botB) which probably hydrolyzes the 78-Gln-|-Phe-79 bond and inhibits neurotransmitter release. In terms of processing, (Microbial infection) Targeted and hydrolyzed by C.botulinum neurotoxin type D (BoNT/D, botD) which probably hydrolyzes the 61-Arg-|-Leu-62 bond and inhibits neurotransmitter release. BoNT/D has low catalytic activity on this protein due to its sequence. Note that humans are not known to be infected by C.botulinum type D. Post-translationally, (Microbial infection) Targeted and hydrolyzed by C.botulinum neurotoxin type F (BoNT/F, botF) which probably hydrolyzes the 60-Gln-|-Lys-61 bond and inhibits neurotransmitter release. (Microbial infection) Targeted and hydrolyzed by C.botulinum neurotoxin type X (BoNT/X) which probably hydrolyzes the 68-Arg-|-Ala-69 bond and inhibits neurotransmitter release. It remains unknown whether BoNT/X is ever produced, or what organisms it targets. Nervous system, skeletal muscle and adipose tissue.

The protein resides in the cytoplasmic vesicle. The protein localises to the secretory vesicle. Its subcellular location is the synaptic vesicle membrane. It localises to the synapse. It is found in the synaptosome. The protein resides in the cytoplasmic vesicle membrane. The protein localises to the mitochondrion outer membrane. Involved in the targeting and/or fusion of transport vesicles to their target membrane. The polypeptide is Vesicle-associated membrane protein 1 (VAMP1) (Homo sapiens (Human)).